The sequence spans 514 residues: 2,3-bisphosphoglycerate-independent phosphoglycerate mutase (514 aa).

Mn(2+)-binding residues include D14 and S64. S64 (phosphoserine intermediate) is an active-site residue. Substrate-binding positions include H125, 155-156 (RD), R187, R193, 263-266 (RADR), and K336. Residues D403, H407, D444, H445, and H463 each contribute to the Mn(2+) site.

The protein belongs to the BPG-independent phosphoglycerate mutase family. Monomer. It depends on Mn(2+) as a cofactor.

The catalysed reaction is (2R)-2-phosphoglycerate = (2R)-3-phosphoglycerate. It functions in the pathway carbohydrate degradation; glycolysis; pyruvate from D-glyceraldehyde 3-phosphate: step 3/5. Its function is as follows. Catalyzes the interconversion of 2-phosphoglycerate and 3-phosphoglycerate. In Salmonella paratyphi B (strain ATCC BAA-1250 / SPB7), this protein is 2,3-bisphosphoglycerate-independent phosphoglycerate mutase.